A 520-amino-acid polypeptide reads, in one-letter code: tRNA-2-methylthio-N(6)-dimethylallyladenosine synthase (520 aa).

The MTTase N-terminal domain maps to 77–195 (KKFLIRTYGC…LPHLLRDAIF (119 aa)). 6 residues coordinate [4Fe-4S] cluster: Cys86, Cys122, Cys156, Cys232, Cys236, and Cys239. The region spanning 218 to 448 (RKNKTQAWVN…ALVNDISNKR (231 aa)) is the Radical SAM core domain. In terms of domain architecture, TRAM spans 450–513 (LDYQDKIVEV…TWSLDGEIVS (64 aa)).

The protein belongs to the methylthiotransferase family. MiaB subfamily. In terms of assembly, monomer. Requires [4Fe-4S] cluster as cofactor.

It localises to the cytoplasm. The catalysed reaction is N(6)-dimethylallyladenosine(37) in tRNA + (sulfur carrier)-SH + AH2 + 2 S-adenosyl-L-methionine = 2-methylsulfanyl-N(6)-dimethylallyladenosine(37) in tRNA + (sulfur carrier)-H + 5'-deoxyadenosine + L-methionine + A + S-adenosyl-L-homocysteine + 2 H(+). Its function is as follows. Catalyzes the methylthiolation of N6-(dimethylallyl)adenosine (i(6)A), leading to the formation of 2-methylthio-N6-(dimethylallyl)adenosine (ms(2)i(6)A) at position 37 in tRNAs that read codons beginning with uridine. This Shouchella clausii (strain KSM-K16) (Alkalihalobacillus clausii) protein is tRNA-2-methylthio-N(6)-dimethylallyladenosine synthase.